The primary structure comprises 206 residues: Probable GTP-binding protein EngB (206 aa).

In terms of domain architecture, EngB-type G spans 8 to 195; sequence RDAEVVLVGR…EECLRTRFHE (188 aa). GTP contacts are provided by residues 16–23, 41–45, 60–63, 140–143, and 175–177; these read GRSNVGKS, GVTRQ, DLPG, NKTD, and ICA. Mg(2+) is bound by residues S23 and T43.

This sequence belongs to the TRAFAC class TrmE-Era-EngA-EngB-Septin-like GTPase superfamily. EngB GTPase family. Requires Mg(2+) as cofactor.

Its function is as follows. Necessary for normal cell division and for the maintenance of normal septation. This is Probable GTP-binding protein EngB from Halorubrum lacusprofundi (strain ATCC 49239 / DSM 5036 / JCM 8891 / ACAM 34).